A 2126-amino-acid polypeptide reads, in one-letter code: Phthioceranic/hydroxyphthioceranic acid synthase (2126 aa).

The Ketosynthase family 3 (KS3) domain occupies 24–447 (VTPVAVIGMA…GTNVHAVVEQ (424 aa)). Cys-196 functions as the Acyl-thioester intermediate; for beta-ketoacyl synthase activity in the catalytic mechanism. Active-site for beta-ketoacyl synthase activity residues include His-331 and His-367. The tract at residues 449–549 (PQTEAQPHAA…VYQPAVGQDD (101 aa)) is linker domain (LD). Residues 550-849 (RGPVWLFSGQ…VAALAGMRRE (300 aa)) are acyltransferase (AT). Ser-641 functions as the Acyl-ester intermediate; for acyltransferase activity in the catalytic mechanism. Residues 909 to 1191 (STVAVHPLLG…LAVCGLRIGT (283 aa)) are dehydratase (DH). An N-terminal hotdog fold region spans residues 914–1032 (HPLLGAHVRL…RRASAVLQQV (119 aa)). In terms of domain architecture, PKS/mFAS DH spans 914-1198 (HPLLGAHVRL…IGTGVSERDK (285 aa)). Catalysis depends on His-947, which acts as the Proton acceptor; for dehydratase activity. The tract at residues 1051-1198 (PCRVDGEDLR…IGTGVSERDK (148 aa)) is C-terminal hotdog fold. The Proton donor; for dehydratase activity role is filled by Asp-1115. A pseudo beta-ketoacyl reductase (PsiKR) region spans residues 1227–1398 (KWLLISDCAA…SEEDETAWRD (172 aa)). The enoylreductase (ER) stretch occupies residues 1426–1750 (SGMRLQIRTP…EHTGKLVLHI (325 aa)). The beta-ketoacyl reductase (KR) stretch occupies residues 1772–2019 (GSYIITGGLG…AERSRFFEVF (248 aa)). Residues 1780 to 1783 (LGGL), 1803 to 1806 (SRTQ), 1831 to 1832 (DI), and 1904 to 1905 (FS) contribute to the NADP(+) site. A Carrier domain is found at 2040–2126 (DEWPARLRQL…DAPAAALSSQ (87 aa)). Residue Ser-2075 is modified to O-(pantetheine 4'-phosphoryl)serine.

The cofactor is pantetheine 4'-phosphate.

It carries out the reaction hexadecanoyl-[(hydroxy)phthioceranic acid synthase] + 7 (S)-methylmalonyl-CoA + 14 NADPH + 21 H(+) = C37-phthioceranyl-[(hydroxy)phthioceranic acid synthase] + 7 CO2 + 14 NADP(+) + 7 CoA + 7 H2O. The enzyme catalyses hexadecanoyl-[(hydroxy)phthioceranic acid synthase] + 8 (S)-methylmalonyl-CoA + 16 NADPH + 24 H(+) = C40-phthioceranyl-[(hydroxy)phthioceranic acid synthase] + 8 CO2 + 16 NADP(+) + 8 CoA + 8 H2O. This is Phthioceranic/hydroxyphthioceranic acid synthase (pks2) from Mycobacterium bovis (strain BCG / Pasteur 1173P2).